Reading from the N-terminus, the 217-residue chain is Thymidylate kinase (217 aa).

7–14 (GIEGAGKS) is a binding site for ATP.

The protein belongs to the thymidylate kinase family.

The enzyme catalyses dTMP + ATP = dTDP + ADP. In terms of biological role, phosphorylation of dTMP to form dTDP in both de novo and salvage pathways of dTTP synthesis. The chain is Thymidylate kinase from Desulfovibrio desulfuricans (strain ATCC 27774 / DSM 6949 / MB).